The primary structure comprises 625 residues: tRNA uridine 5-carboxymethylaminomethyl modification enzyme MnmG (625 aa).

11-16 (GAGHAG) is an FAD binding site. 271–285 (GPRYCPSIETKIVTF) lines the NAD(+) pocket.

The protein belongs to the MnmG family. As to quaternary structure, homodimer. Heterotetramer of two MnmE and two MnmG subunits. It depends on FAD as a cofactor.

The protein localises to the cytoplasm. Functionally, NAD-binding protein involved in the addition of a carboxymethylaminomethyl (cmnm) group at the wobble position (U34) of certain tRNAs, forming tRNA-cmnm(5)s(2)U34. This is tRNA uridine 5-carboxymethylaminomethyl modification enzyme MnmG from Parabacteroides distasonis (strain ATCC 8503 / DSM 20701 / CIP 104284 / JCM 5825 / NCTC 11152).